Consider the following 142-residue polypeptide: Transcriptional regulator MraZ (142 aa).

2 SpoVT-AbrB domains span residues 5-47 (THTP…PAPE) and 76-119 (AHDE…DRVA).

It belongs to the MraZ family. In terms of assembly, forms oligomers.

It localises to the cytoplasm. Its subcellular location is the nucleoid. This is Transcriptional regulator MraZ from Salinispora arenicola (strain CNS-205).